The sequence spans 913 residues: Isoleucine--tRNA ligase (913 aa).

The short motif at 57–67 (PYANGDIHLGT) is the 'HIGH' region element. Glu-549 lines the L-isoleucyl-5'-AMP pocket. The 'KMSKS' region signature appears at 590–594 (KMSKS). An ATP-binding site is contributed by Lys-593. Cys-881, Cys-884, Cys-901, and Cys-904 together coordinate Zn(2+).

This sequence belongs to the class-I aminoacyl-tRNA synthetase family. IleS type 1 subfamily. As to quaternary structure, monomer. Requires Zn(2+) as cofactor.

It localises to the cytoplasm. The enzyme catalyses tRNA(Ile) + L-isoleucine + ATP = L-isoleucyl-tRNA(Ile) + AMP + diphosphate. In terms of biological role, catalyzes the attachment of isoleucine to tRNA(Ile). As IleRS can inadvertently accommodate and process structurally similar amino acids such as valine, to avoid such errors it has two additional distinct tRNA(Ile)-dependent editing activities. One activity is designated as 'pretransfer' editing and involves the hydrolysis of activated Val-AMP. The other activity is designated 'posttransfer' editing and involves deacylation of mischarged Val-tRNA(Ile). The polypeptide is Isoleucine--tRNA ligase (Fervidobacterium nodosum (strain ATCC 35602 / DSM 5306 / Rt17-B1)).